Consider the following 279-residue polypeptide: Undecaprenyl-diphosphatase (279 aa).

Helical transmembrane passes span 10–30, 48–68, 96–116, 128–148, 203–223, 229–249, and 259–279; these read FICF…FLPI, LGVS…IYYF, LFIY…LIKL, GLFS…LSEI, SFLV…FSLF, IDII…IFAI, and NNTL…LTTL.

The protein belongs to the UppP family.

Its subcellular location is the cell inner membrane. The catalysed reaction is di-trans,octa-cis-undecaprenyl diphosphate + H2O = di-trans,octa-cis-undecaprenyl phosphate + phosphate + H(+). In terms of biological role, catalyzes the dephosphorylation of undecaprenyl diphosphate (UPP). Confers resistance to bacitracin. In Prochlorococcus marinus (strain NATL1A), this protein is Undecaprenyl-diphosphatase.